Consider the following 1048-residue polypeptide: NACHT, LRR and PYD domains-containing protein 8 (1048 aa).

The disordered stretch occupies residues 1 to 23 (MSDVNPPSDTPIPFSSSSTHSSH). Residues 11 to 23 (PIPFSSSSTHSSH) show a composition bias toward low complexity. In terms of domain architecture, Pyrin spans 33 to 131 (PGSPCENGVM…NAILPTLEPE (99 aa)). Residues 204-527 (KTVAIQGAPG…FYVLCFPQRL (324 aa)) enclose the NACHT domain. 210-217 (GAPGIGKT) is an ATP binding site. LRR repeat units lie at residues 815–838 (NGHLKTLILRKNSLENCGAYYLSV), 839–861 (AQLERLSIENCNLTQLTCESLAS), 866–890 (SKMLTHLSLAENALKDEGAKHIWNA), 923–950 (NKTLKSLDLSFNSLKDDGVILLCEALKN), and 980–1007 (NQHLRHLDLSKNAIGVYGILTLCEAFSS). Residues 1029–1048 (PTPHPPDFTGKSDCLSQINP) are disordered.

It belongs to the NLRP family.

It is found in the cytoplasm. Functionally, involved in inflammation. This Homo sapiens (Human) protein is NACHT, LRR and PYD domains-containing protein 8 (NLRP8).